The following is an 808-amino-acid chain: Phenylalanine--tRNA ligase beta subunit (808 aa).

Residues 40–149 (RPELDFVKIV…DQAEVGKTIR (110 aa)) enclose the tRNA-binding domain. The B5 domain occupies 407-484 (HKEVRIHTDI…RTKGYDTIQV (78 aa)). Mg(2+) is bound by residues Asp-462, Asp-468, Glu-471, and Glu-472. The 93-residue stretch at 716–808 (SQFPEAEIDL…LAGKNGFVLR (93 aa)) folds into the FDX-ACB domain.

This sequence belongs to the phenylalanyl-tRNA synthetase beta subunit family. Type 1 subfamily. In terms of assembly, tetramer of two alpha and two beta subunits. The cofactor is Mg(2+).

The protein localises to the cytoplasm. The enzyme catalyses tRNA(Phe) + L-phenylalanine + ATP = L-phenylalanyl-tRNA(Phe) + AMP + diphosphate + H(+). This chain is Phenylalanine--tRNA ligase beta subunit, found in Leptospira interrogans serogroup Icterohaemorrhagiae serovar Lai (strain 56601).